A 263-amino-acid polypeptide reads, in one-letter code: Purine nucleoside phosphorylase SAR1163 (263 aa).

The Zn(2+) site is built by histidine 79, cysteine 124, and histidine 141.

This sequence belongs to the purine nucleoside phosphorylase YfiH/LACC1 family. Homodimer. It depends on Cu(2+) as a cofactor. Zn(2+) is required as a cofactor.

The enzyme catalyses adenosine + phosphate = alpha-D-ribose 1-phosphate + adenine. The catalysed reaction is S-methyl-5'-thioadenosine + phosphate = 5-(methylsulfanyl)-alpha-D-ribose 1-phosphate + adenine. It catalyses the reaction inosine + phosphate = alpha-D-ribose 1-phosphate + hypoxanthine. It carries out the reaction adenosine + H2O + H(+) = inosine + NH4(+). Its function is as follows. Purine nucleoside enzyme that catalyzes the phosphorolysis of adenosine and inosine nucleosides, yielding D-ribose 1-phosphate and the respective free bases, adenine and hypoxanthine. Also catalyzes the phosphorolysis of S-methyl-5'-thioadenosine into adenine and S-methyl-5-thio-alpha-D-ribose 1-phosphate. Also has adenosine deaminase activity. This chain is Purine nucleoside phosphorylase SAR1163, found in Staphylococcus aureus (strain MRSA252).